The chain runs to 2537 residues: Centrosomal protein of 192 kDa (2537 aa).

Disordered regions lie at residues 69–138 (FSVP…ATES) and 288–308 (HSSE…LPGT). The span at 70-81 (SVPSGSSPGSQS) shows a compositional bias: low complexity. Residues 106-122 (VESQRLSNALSKQSALQ) are compositionally biased toward polar residues. A compositionally biased stretch (basic and acidic residues) spans 288-298 (HSSETTHKESE). Ser-812 is subject to Phosphoserine. 4 disordered regions span residues 950-1021 (VTFE…QQQP), 1043-1064 (VSEP…DRKS), 1101-1158 (KGTL…WTSN), and 1182-1234 (ATSH…STVH). A compositionally biased stretch (polar residues) spans 960 to 970 (PKNSDLKNTSP). Residues 984 to 1005 (FRPSTSPLSHSSPSEISGTSSS) are compositionally biased toward low complexity. Polar residues-rich tracts occupy residues 1046-1055 (PESSYPTTAT) and 1103-1112 (TLSSIIQNNS). The segment covering 1128–1141 (EYVKPDFRWSKDPS) has biased composition (basic and acidic residues). A compositionally biased stretch (polar residues) spans 1142–1158 (SKSGNLLETSEVGWTSN). Residues 1195 to 1207 (EDQRISPKDKSTA) are compositionally biased toward basic and acidic residues. Polar residues predominate over residues 1213–1234 (GQVSHQTTSENQCTPIPSSTVH). Residues Ser-1755, Ser-2098, and Ser-2110 each carry the phosphoserine modification. Pro-2313 carries the hydroxyproline modification.

As to quaternary structure, interacts with SHBG. Interacts with PLK4; this interaction mediates the formation of a ternary complex composed by PLK4, TENT5C and CEP192. Interacts with CCDC66. Post-translationally, hydroxylation by PHD1/EGLN2 at Pro-2313 promotes ubiquitination. In terms of processing, ubiquitinated by a SCF(SKP2) complex following proline hydroxylation. Ubiquitinated in a FBXL13-dependent manner, leading to proteasomal degradation.

It is found in the cytoplasm. Its subcellular location is the cytoskeleton. The protein localises to the microtubule organizing center. It localises to the centrosome. The protein resides in the centriole. Required for mitotic centrosome maturation and bipolar spindle assembly. Appears to be a major regulator of pericentriolar material (PCM) recruitment, centrosome maturation, and centriole duplication. Centrosome-specific activating scaffold for AURKA and PLK1. The protein is Centrosomal protein of 192 kDa of Homo sapiens (Human).